We begin with the raw amino-acid sequence, 100 residues long: Urease subunit gamma (100 aa).

It belongs to the urease gamma subunit family. Heterotrimer of UreA (gamma), UreB (beta) and UreC (alpha) subunits. Three heterotrimers associate to form the active enzyme.

It is found in the cytoplasm. The catalysed reaction is urea + 2 H2O + H(+) = hydrogencarbonate + 2 NH4(+). The protein operates within nitrogen metabolism; urea degradation; CO(2) and NH(3) from urea (urease route): step 1/1. This chain is Urease subunit gamma, found in Paraburkholderia phymatum (strain DSM 17167 / CIP 108236 / LMG 21445 / STM815) (Burkholderia phymatum).